A 673-amino-acid polypeptide reads, in one-letter code: Xaa-Pro aminopeptidase 2 (673 aa).

A signal peptide spans 1–21 (MAQACWGCYPWLVLICACAWG). 3 N-linked (GlcNAc...) asparagine glycosylation sites follow: asparagine 34, asparagine 48, and asparagine 64. Residue arginine 115 coordinates substrate. Residues asparagine 277, asparagine 290, and asparagine 294 are each glycosylated (N-linked (GlcNAc...) asparagine). Residue histidine 429 participates in substrate binding. Aspartate 449 is a binding site for Mn(2+). 3 residues coordinate Zn(2+): aspartate 449, aspartate 460, and histidine 523. Substrate contacts are provided by histidine 523, histidine 532, and glutamate 554. Positions 554 and 568 each coordinate Zn(2+). The GPI-anchor amidated alanine moiety is linked to residue alanine 649. Positions 650–673 (RAAPTTSLGSLMTVSALAILGWSV) are cleaved as a propeptide — removed in mature form.

Belongs to the peptidase M24B family. Homotrimer. Requires Zn(2+) as cofactor. Post-translationally, N-glycosylated. As to expression, kidney.

It is found in the cell membrane. The enzyme catalyses Release of any N-terminal amino acid, including proline, that is linked to proline, even from a dipeptide or tripeptide.. Inhibited by apstatin and the metal ion chelator EDTA. Potently inhibited by the converting enzyme inhibitors cilazaprilat; enalaprilat; L155,212; ramiprilat and YS 980. Also inhibited to a lesser extent by indolaprilat; quinaprilat; spiraprilat; captopril and zofenoprilat. Membrane-bound metalloprotease which catalyzes the removal of a penultimate prolyl residue from the N-termini of peptides, such as Arg-Pro-Pro. May play a role in the metabolism of the vasodilator bradykinin. The protein is Xaa-Pro aminopeptidase 2 (XPNPEP2) of Sus scrofa (Pig).